The primary structure comprises 694 residues: Elongation factor G (694 aa).

Positions 9–288 (DAIRNIGIMA…VIVKWLPSPL (280 aa)) constitute a tr-type G domain. GTP is bound by residues 18-25 (AHIDAGKT), 82-86 (DTPGH), and 136-139 (NKMD).

The protein belongs to the TRAFAC class translation factor GTPase superfamily. Classic translation factor GTPase family. EF-G/EF-2 subfamily.

It localises to the cytoplasm. Catalyzes the GTP-dependent ribosomal translocation step during translation elongation. During this step, the ribosome changes from the pre-translocational (PRE) to the post-translocational (POST) state as the newly formed A-site-bound peptidyl-tRNA and P-site-bound deacylated tRNA move to the P and E sites, respectively. Catalyzes the coordinated movement of the two tRNA molecules, the mRNA and conformational changes in the ribosome. This chain is Elongation factor G, found in Chlamydia trachomatis serovar L2 (strain ATCC VR-902B / DSM 19102 / 434/Bu).